We begin with the raw amino-acid sequence, 339 residues long: Alpha-ketoglutarate-dependent dioxygenase btcD (339 aa).

Position 96 (His-96) interacts with substrate. Fe cation is bound by residues His-140 and Asp-142. Thr-173 serves as a coordination point for 2-oxoglutarate. A disordered region spans residues 207-230; that stretch reads DGSDPKFQVPRGSPANVGTNLRPT. His-302 lines the Fe cation pocket. Residues Arg-314 and Arg-318 each contribute to the 2-oxoglutarate site. Arg-318 is a binding site for substrate.

This sequence belongs to the TfdA dioxygenase family. Fe(2+) serves as cofactor.

The protein operates within secondary metabolite biosynthesis; terpenoid biosynthesis. Its function is as follows. Alpha-ketoglutarate-dependent dioxygenase; part of the gene cluster that mediates the biosynthesis of betaestacins. The bifunctional terpene synthase btcA converts isopentenyl diphosphate (IPP) and dimethylallyl diphosphate (DMAPP) into the sesterterpene betaestacin I. The C-terminal prenyltransferase (PT) domain of btcA catalyzes formation of GFPP, whereas the N-terminal terpene cyclase (TC) domain catalyzes the cyclization of GFPP into betaestacin I. The cytochrome P450 monooxygenase btcB is then responsible for the six-step oxidation of betaestacin I to yield betaestacin II. The roles of the cytochrome P450 monooxygenase btcC and the alpha-ketoglutarate-dependent dioxygenase btcD have not been identified yet. In Neocamarosporium betae (Beet black rot fungus), this protein is Alpha-ketoglutarate-dependent dioxygenase btcD.